A 458-amino-acid chain; its full sequence is tRNA-2-methylthio-N(6)-dimethylallyladenosine synthase (458 aa).

Residues 15-134 (KKVFIKTYGC…LPDLLEQTKQ (120 aa)) form the MTTase N-terminal domain. The [4Fe-4S] cluster site is built by Cys24, Cys60, Cys97, Cys175, Cys179, and Cys182. In terms of domain architecture, Radical SAM core spans 161-393 (RKRGVSAFLT…QVLLLEQQNA (233 aa)). The TRAM domain maps to 396-457 (RSKIGQTTDV…SNSFVGEIAN (62 aa)).

It belongs to the methylthiotransferase family. MiaB subfamily. In terms of assembly, monomer. The cofactor is [4Fe-4S] cluster.

It localises to the cytoplasm. It carries out the reaction N(6)-dimethylallyladenosine(37) in tRNA + (sulfur carrier)-SH + AH2 + 2 S-adenosyl-L-methionine = 2-methylsulfanyl-N(6)-dimethylallyladenosine(37) in tRNA + (sulfur carrier)-H + 5'-deoxyadenosine + L-methionine + A + S-adenosyl-L-homocysteine + 2 H(+). Functionally, catalyzes the methylthiolation of N6-(dimethylallyl)adenosine (i(6)A), leading to the formation of 2-methylthio-N6-(dimethylallyl)adenosine (ms(2)i(6)A) at position 37 in tRNAs that read codons beginning with uridine. The polypeptide is tRNA-2-methylthio-N(6)-dimethylallyladenosine synthase (Bartonella quintana (strain Toulouse) (Rochalimaea quintana)).